Consider the following 346-residue polypeptide: Phosphoribosylformylglycinamidine cyclo-ligase (346 aa).

It belongs to the AIR synthase family.

The protein localises to the cytoplasm. It catalyses the reaction 2-formamido-N(1)-(5-O-phospho-beta-D-ribosyl)acetamidine + ATP = 5-amino-1-(5-phospho-beta-D-ribosyl)imidazole + ADP + phosphate + H(+). It functions in the pathway purine metabolism; IMP biosynthesis via de novo pathway; 5-amino-1-(5-phospho-D-ribosyl)imidazole from N(2)-formyl-N(1)-(5-phospho-D-ribosyl)glycinamide: step 2/2. The sequence is that of Phosphoribosylformylglycinamidine cyclo-ligase from Bacillus mycoides (strain KBAB4) (Bacillus weihenstephanensis).